The primary structure comprises 204 residues: uncharacterized protein (204 aa).

A signal peptide spans 1–17 (MKRLVTGLLALSLFLAA). The segment at 17–100 (ACGQDSDQQK…NNNQANNNQK (84 aa)) is disordered. Cysteine 18 carries the N-palmitoyl cysteine lipid modification. The S-diacylglycerol cysteine moiety is linked to residue cysteine 18. A compositionally biased stretch (basic and acidic residues) spans 23-70 (DQQKDGNKEKDDKAKTEQQDKKTNDSSKDKKDNKDDSKDVNKDNKDNS). Residues 71-100 (ANDNQQQSNSNATNNDQNQTNNNQANNNQK) are compositionally biased toward low complexity.

It is found in the cell membrane. This is an uncharacterized protein from Staphylococcus aureus (strain MSSA476).